Here is a 524-residue protein sequence, read N- to C-terminus: Cytochrome P450 monooxygenase patH (524 aa).

Over 1–4 the chain is Cytoplasmic; it reads MEPM. The chain crosses the membrane as a helical span at residues 5-23; the sequence is LLLILVAAVVLLFVRWAFV. The Lumenal portion of the chain corresponds to 24–524; that stretch reads YGHRTSNMPK…KEVFSQFTEG (501 aa). Asparagine 191 carries N-linked (GlcNAc...) asparagine glycosylation. Cysteine 442 is a binding site for heme. Asparagine 499 carries an N-linked (GlcNAc...) asparagine glycan.

This sequence belongs to the cytochrome P450 family. It depends on heme as a cofactor.

It is found in the endoplasmic reticulum membrane. It carries out the reaction 3-methylphenol + reduced [NADPH--hemoprotein reductase] + O2 = 3-hydroxybenzyl alcohol + oxidized [NADPH--hemoprotein reductase] + H2O + H(+). It participates in mycotoxin biosynthesis; patulin biosynthesis. Functionally, cytochrome P450 monooxygenase; part of the gene cluster that mediates the biosynthesis of patulin, an acetate-derived tetraketide mycotoxin produced by several fungal species that shows antimicrobial properties against several bacteria. PatH catalyzes the conversion of m-cresol into m-hydroxybenzyl alcohol. The pathway begins with the synthesis of 6-methylsalicylic acid by the polyketide synthase (PKS) patK via condensation of acetate and malonate units. The 6-methylsalicylic acid decarboxylase patG then catalyzes the decarboxylation of 6-methylsalicylic acid to yield m-cresol (also known as 3-methylphenol). These first reactions occur in the cytosol. The intermediate m-cresol is then transported into the endoplasmic reticulum where the cytochrome P450 monooxygenase patH converts it to m-hydroxybenzyl alcohol, which is further converted to gentisyl alcohol by the cytochrome P450 monooxygenase patI. The oxidoreductases patJ and patO further convert gentisyl alcohol to isoepoxydon in the vacuole. PatN catalyzes then the transformation of isoepoxydon into phyllostine. The cluster protein patF is responsible for the conversion from phyllostine to neopatulin whereas the alcohol dehydrogenase patD converts neopatulin to E-ascladiol. The steps between isoepoxydon and E-ascladiol occur in the cytosol, and E-ascladiol is probably secreted to the extracellular space by one of the cluster-specific transporters patC or patM. Finally, the secreted patulin synthase patE catalyzes the conversion of E-ascladiol to patulin. The chain is Cytochrome P450 monooxygenase patH from Aspergillus clavatus (strain ATCC 1007 / CBS 513.65 / DSM 816 / NCTC 3887 / NRRL 1 / QM 1276 / 107).